The chain runs to 448 residues: Phosphoglucosamine mutase (448 aa).

The Phosphoserine intermediate role is filled by Ser102. Positions 102, 243, 245, and 247 each coordinate Mg(2+). Phosphoserine is present on Ser102.

This sequence belongs to the phosphohexose mutase family. The cofactor is Mg(2+). In terms of processing, activated by phosphorylation.

The catalysed reaction is alpha-D-glucosamine 1-phosphate = D-glucosamine 6-phosphate. In terms of biological role, catalyzes the conversion of glucosamine-6-phosphate to glucosamine-1-phosphate. The polypeptide is Phosphoglucosamine mutase (Parvibaculum lavamentivorans (strain DS-1 / DSM 13023 / NCIMB 13966)).